We begin with the raw amino-acid sequence, 228 residues long: Small ribosomal subunit protein uS3 (228 aa).

Residues 39–107 (VREYLQDKLK…PVHINIEEIR (69 aa)) enclose the KH type-2 domain.

The protein belongs to the universal ribosomal protein uS3 family. As to quaternary structure, part of the 30S ribosomal subunit. Forms a tight complex with proteins S10 and S14.

In terms of biological role, binds the lower part of the 30S subunit head. Binds mRNA in the 70S ribosome, positioning it for translation. The sequence is that of Small ribosomal subunit protein uS3 from Stutzerimonas stutzeri (strain A1501) (Pseudomonas stutzeri).